The following is a 486-amino-acid chain: Glutamyl-tRNA(Gln) amidotransferase subunit A (486 aa).

Catalysis depends on charge relay system residues Lys78 and Ser153. Catalysis depends on Ser177, which acts as the Acyl-ester intermediate.

It belongs to the amidase family. GatA subfamily. As to quaternary structure, heterotrimer of A, B and C subunits.

It carries out the reaction L-glutamyl-tRNA(Gln) + L-glutamine + ATP + H2O = L-glutaminyl-tRNA(Gln) + L-glutamate + ADP + phosphate + H(+). Allows the formation of correctly charged Gln-tRNA(Gln) through the transamidation of misacylated Glu-tRNA(Gln) in organisms which lack glutaminyl-tRNA synthetase. The reaction takes place in the presence of glutamine and ATP through an activated gamma-phospho-Glu-tRNA(Gln). The chain is Glutamyl-tRNA(Gln) amidotransferase subunit A from Ruminiclostridium cellulolyticum (strain ATCC 35319 / DSM 5812 / JCM 6584 / H10) (Clostridium cellulolyticum).